We begin with the raw amino-acid sequence, 239 residues long: Fatty acid metabolism regulator protein (239 aa).

An HTH gntR-type domain is found at 6–74; sequence QSPAGFAEEY…HGKPTKVNNF (69 aa). The segment at residues 34 to 53 is a DNA-binding region (H-T-H motif); that stretch reads ERELSELIGVTRTTLREVLQ.

In terms of assembly, homodimer.

The protein resides in the cytoplasm. Functionally, multifunctional regulator of fatty acid metabolism. This is Fatty acid metabolism regulator protein from Enterobacter sp. (strain 638).